The sequence spans 667 residues: Cylicin-1 (667 aa).

2 disordered regions span residues 121–251 and 275–634; these read PYTH…SSNV and SQNN…ILPS. Basic and acidic residues predominate over residues 129–172; the sequence is KKAESKKYKDDKKETALKKISKKDTGPHEVDEKPKRRNKADKTP. Low complexity predominate over residues 173 to 182; that stretch reads SKSSHGSQLS. Over residues 187–197 the composition is skewed to basic and acidic residues; sequence SKSETNPESKD. Residues 223–237 show a composition bias toward low complexity; sequence STSTKKYSKSSKNNS. A compositionally biased stretch (polar residues) spans 238 to 251; that stretch reads DAVSETCSKNSSNV. Composition is skewed to basic and acidic residues over residues 284–326, 345–371, 380–394, 417–431, 438–464, 483–506, 521–533, 549–558, and 583–593; these read KKDA…KDTE, SKKD…DAKK, SKKD…KDAE, GDSK…KDAV, SKKD…KEST, SKKD…KKAT, KKTEMFKSSD, and DSKKDAVEPKR. 9 tandem repeats follow at residues 287-305, 306-337, 338-368, 369-405, 406-442, 443-475, 476-516, 517-547, and 548-569. Positions 287–569 are 9 X approximate tandem repeats; that stretch reads AKKDAKGKGS…ESEESLFKPG (283 aa). Residues 624–633 are compositionally biased toward pro residues; it reads PLPPCEPILP.

In terms of assembly, interacts with proteins of spermatozoa head including ACTL7A, CCIN, FAM209A and SPACA1; the interactions may be necessary for proper acrosome attachment to the nuclear envelope. As to expression, testis.

It is found in the cytoplasm. The protein resides in the cytoskeleton. Its subcellular location is the perinuclear theca. It localises to the calyx. Plays a role in the establishment of normal sperm morphology during spermatogenesis and is required for acrosome attachment to the nuclear envelope. In Bos taurus (Bovine), this protein is Cylicin-1 (CYLC1).